Here is a 246-residue protein sequence, read N- to C-terminus: uncharacterized protein (246 aa).

A coiled-coil region spans residues 204–243 (TTKLKKLEKEIHELPYMLINGKITYEEYKKRIREIEKEIG).

This is an uncharacterized protein from Aquifex aeolicus (strain VF5).